The chain runs to 164 residues: 6,7-dimethyl-8-ribityllumazine synthase (164 aa).

5-amino-6-(D-ribitylamino)uracil contacts are provided by residues Phe-24, 58-60, and 82-84; these read ALE and AVI. Residue 87 to 88 coordinates (2S)-2-hydroxy-3-oxobutyl phosphate; that stretch reads ET. His-90 acts as the Proton donor in catalysis. Residue Asn-115 coordinates 5-amino-6-(D-ribitylamino)uracil. A (2S)-2-hydroxy-3-oxobutyl phosphate-binding site is contributed by Arg-129.

It belongs to the DMRL synthase family.

It catalyses the reaction (2S)-2-hydroxy-3-oxobutyl phosphate + 5-amino-6-(D-ribitylamino)uracil = 6,7-dimethyl-8-(1-D-ribityl)lumazine + phosphate + 2 H2O + H(+). The protein operates within cofactor biosynthesis; riboflavin biosynthesis; riboflavin from 2-hydroxy-3-oxobutyl phosphate and 5-amino-6-(D-ribitylamino)uracil: step 1/2. In terms of biological role, catalyzes the formation of 6,7-dimethyl-8-ribityllumazine by condensation of 5-amino-6-(D-ribitylamino)uracil with 3,4-dihydroxy-2-butanone 4-phosphate. This is the penultimate step in the biosynthesis of riboflavin. In Ralstonia nicotianae (strain ATCC BAA-1114 / GMI1000) (Ralstonia solanacearum), this protein is 6,7-dimethyl-8-ribityllumazine synthase.